We begin with the raw amino-acid sequence, 473 residues long: Glutamate--tRNA ligase 2 (473 aa).

Positions 11 to 21 (PSPTGYLHIGG) match the 'HIGH' region motif. Basic and acidic residues predominate over residues 113–133 (KARAEGRPPRYDGRWRDRDPS). Residues 113–136 (KARAEGRPPRYDGRWRDRDPSEAP) are disordered. Positions 240–244 (KLSKR) match the 'KMSKS' region motif. An ATP-binding site is contributed by lysine 243.

This sequence belongs to the class-I aminoacyl-tRNA synthetase family. Glutamate--tRNA ligase type 1 subfamily. In terms of assembly, monomer.

Its subcellular location is the cytoplasm. The enzyme catalyses tRNA(Glu) + L-glutamate + ATP = L-glutamyl-tRNA(Glu) + AMP + diphosphate. In terms of biological role, catalyzes the attachment of glutamate to tRNA(Glu) in a two-step reaction: glutamate is first activated by ATP to form Glu-AMP and then transferred to the acceptor end of tRNA(Glu). This chain is Glutamate--tRNA ligase 2, found in Brucella canis (strain ATCC 23365 / NCTC 10854 / RM-666).